The chain runs to 1073 residues: Guanylyl cyclase C (1073 aa).

The signal sequence occupies residues 1–23 (MKTPLLALALWSLLLQLGLTFWP). The Extracellular segment spans residues 24-433 (SSVSQNCHNG…IPGRGPQILM (410 aa)). N-linked (GlcNAc...) asparagine glycosylation is found at N32, N43, N79, N195, N284, N307, and N402. The helical transmembrane segment at 434–454 (IAVFTLTGTIVLLLLIALLVL) threads the bilayer. Residues 455–1073 (RKYKREYALR…NTTDNESTHF (619 aa)) are Cytoplasmic-facing. The 261-residue stretch at 489-749 (LKIDDDRRRD…KIENTLAKIF (261 aa)) folds into the Protein kinase domain. The region spanning 824–954 (TIYFSDIVGF…DTVNTASRME (131 aa)) is the Guanylate cyclase domain.

The protein belongs to the adenylyl cyclase class-4/guanylyl cyclase family. As to quaternary structure, homotrimer. Interacts via its C-terminal region with NHERF4. Interacts with the lectin chaperone VIP36. Glycosylation at Asn-79 is required for interaction with VIP36 while glycosylation at Asn-402 modulates ligand-mediated GC-C activation.

Its subcellular location is the cell membrane. It is found in the endoplasmic reticulum membrane. The catalysed reaction is GTP = 3',5'-cyclic GMP + diphosphate. Guanylyl cyclase that catalyzes synthesis of cyclic GMP (cGMP) from GTP. This is Guanylyl cyclase C (GUCY2C) from Sus scrofa (Pig).